The chain runs to 318 residues: Biotin synthase (318 aa).

In terms of domain architecture, Radical SAM core spans 44–273; sequence LCGNKFDLCT…TVQIRLAGGR (230 aa). The [4Fe-4S] cluster site is built by Cys-62, Cys-66, and Cys-69. [2Fe-2S] cluster contacts are provided by Ser-106, Cys-138, Cys-198, and Arg-268.

Belongs to the radical SAM superfamily. Biotin synthase family. In terms of assembly, homodimer. It depends on [4Fe-4S] cluster as a cofactor. [2Fe-2S] cluster serves as cofactor.

The catalysed reaction is (4R,5S)-dethiobiotin + (sulfur carrier)-SH + 2 reduced [2Fe-2S]-[ferredoxin] + 2 S-adenosyl-L-methionine = (sulfur carrier)-H + biotin + 2 5'-deoxyadenosine + 2 L-methionine + 2 oxidized [2Fe-2S]-[ferredoxin]. Its pathway is cofactor biosynthesis; biotin biosynthesis; biotin from 7,8-diaminononanoate: step 2/2. Catalyzes the conversion of dethiobiotin (DTB) to biotin by the insertion of a sulfur atom into dethiobiotin via a radical-based mechanism. The sequence is that of Biotin synthase from Clostridium botulinum (strain Loch Maree / Type A3).